Consider the following 170-residue polypeptide: Brassinosteroid-responsive RING protein 1 (170 aa).

A helical transmembrane segment spans residues 15-37; it reads LFVQTLSILGFIRTIVFSIFRFL. The segment at 94-137 adopts an RING-type; atypical zinc-finger fold; sequence CAVCLYEFEGEQEIRWLRNCRHIFHRSCLDRWMDHDQKTCPLCR.

The protein belongs to the RING-type zinc finger family. In terms of tissue distribution, highly expressed in stems, rosette leaves and siliques, and moderately expressed in roots, cauline leaves and flower. Detected at low levels in seeds.

It localises to the membrane. Functionally, may be involved in the brassinosteroids (BRs) signaling pathway and regulate the growth and development of rosette leaves. Seems to prevent over development of leaves and inflorescence stems. This chain is Brassinosteroid-responsive RING protein 1, found in Arabidopsis thaliana (Mouse-ear cress).